We begin with the raw amino-acid sequence, 197 residues long: Ion-translocating oxidoreductase complex subunit B (197 aa).

A hydrophobic region spans residues 1 to 26 (MSIVIIAVLALSALALTFGAVLGFAS). The 4Fe-4S domain maps to 32–90 (EGNPIVDQIDGLLPQTQCGQCGYPGCRPYAEAIANGDAINKCPPGGEATITALADLLDV). Residues Cys-49, Cys-52, Cys-57, Cys-73, Cys-115, Cys-118, Cys-121, Cys-125, Cys-145, Cys-148, Cys-151, and Cys-155 each coordinate [4Fe-4S] cluster. 4Fe-4S ferredoxin-type domains lie at 106 to 135 (QVAY…GAAK) and 136 to 165 (QMHT…MIPA).

Belongs to the 4Fe4S bacterial-type ferredoxin family. RnfB subfamily. As to quaternary structure, the complex is composed of six subunits: RnfA, RnfB, RnfC, RnfD, RnfE and RnfG. [4Fe-4S] cluster serves as cofactor.

It is found in the cell inner membrane. Functionally, part of a membrane-bound complex that couples electron transfer with translocation of ions across the membrane. In Hahella chejuensis (strain KCTC 2396), this protein is Ion-translocating oxidoreductase complex subunit B.